A 513-amino-acid chain; its full sequence is Light-independent protochlorophyllide reductase subunit B (513 aa).

Aspartate 36 is a [4Fe-4S] cluster binding site. Catalysis depends on aspartate 299, which acts as the Proton donor. 434–435 (GM) contributes to the substrate binding site.

The protein belongs to the ChlB/BchB/BchZ family. As to quaternary structure, protochlorophyllide reductase is composed of three subunits; ChlL, ChlN and ChlB. Forms a heterotetramer of two ChlB and two ChlN subunits. [4Fe-4S] cluster is required as a cofactor.

It localises to the plastid. It is found in the chloroplast. The catalysed reaction is chlorophyllide a + oxidized 2[4Fe-4S]-[ferredoxin] + 2 ADP + 2 phosphate = protochlorophyllide a + reduced 2[4Fe-4S]-[ferredoxin] + 2 ATP + 2 H2O. Its pathway is porphyrin-containing compound metabolism; chlorophyll biosynthesis (light-independent). In terms of biological role, component of the dark-operative protochlorophyllide reductase (DPOR) that uses Mg-ATP and reduced ferredoxin to reduce ring D of protochlorophyllide (Pchlide) to form chlorophyllide a (Chlide). This reaction is light-independent. The NB-protein (ChlN-ChlB) is the catalytic component of the complex. The protein is Light-independent protochlorophyllide reductase subunit B of Zygnema circumcarinatum (Green alga).